A 141-amino-acid chain; its full sequence is Nucleoside diphosphate kinase (141 aa).

Lys-11, Phe-59, Arg-87, Thr-93, Arg-104, and Asn-114 together coordinate ATP. The active-site Pros-phosphohistidine intermediate is His-117.

It belongs to the NDK family. Homotetramer. It depends on Mg(2+) as a cofactor.

Its subcellular location is the cytoplasm. The enzyme catalyses a 2'-deoxyribonucleoside 5'-diphosphate + ATP = a 2'-deoxyribonucleoside 5'-triphosphate + ADP. The catalysed reaction is a ribonucleoside 5'-diphosphate + ATP = a ribonucleoside 5'-triphosphate + ADP. Functionally, major role in the synthesis of nucleoside triphosphates other than ATP. The ATP gamma phosphate is transferred to the NDP beta phosphate via a ping-pong mechanism, using a phosphorylated active-site intermediate. This is Nucleoside diphosphate kinase from Histophilus somni (strain 129Pt) (Haemophilus somnus).